The following is a 140-amino-acid chain: MGARSTGREAALQMLFAVEAGGSSAPRVVATFWRETPGDPEGRAYADEVVVGVAEDLAAVDEAIRKASTNWRLERMARVDRNVLRLGAWELMNRPEVPRAVILDEAVELAKRYGSEESGAFVNGVLDRIAENLGRVDRDR.

The protein belongs to the NusB family.

Functionally, involved in transcription antitermination. Required for transcription of ribosomal RNA (rRNA) genes. Binds specifically to the boxA antiterminator sequence of the ribosomal RNA (rrn) operons. In Sorangium cellulosum (strain So ce56) (Polyangium cellulosum (strain So ce56)), this protein is Transcription antitermination protein NusB.